We begin with the raw amino-acid sequence, 156 residues long: Transcription elongation factor GreA (156 aa).

The stretch at Met-1–Arg-32 forms a coiled coil.

It belongs to the GreA/GreB family.

In terms of biological role, necessary for efficient RNA polymerase transcription elongation past template-encoded arresting sites. The arresting sites in DNA have the property of trapping a certain fraction of elongating RNA polymerases that pass through, resulting in locked ternary complexes. Cleavage of the nascent transcript by cleavage factors such as GreA or GreB allows the resumption of elongation from the new 3'terminus. GreA releases sequences of 2 to 3 nucleotides. The chain is Transcription elongation factor GreA from Thermotoga sp. (strain RQ2).